The sequence spans 186 residues: MADEQQTLDQQTPEQPTGAAEDLTARVQELEEQLAAAQDQALRMVADLQNVRRRAEQDVEKAHKFALEKFAGDLLAVVDTLERGLEMSDPNDEAIKPMREGMELTLKMFDDTLRRYQVEALNPEGEPFNPEQYQAMAMQESASAEPGSVLKVFQKGYLLNGRLLRPAMVVVSKAPAETPPSIDEQA.

Residues 1 to 15 (MADEQQTLDQQTPEQ) are compositionally biased toward polar residues. Residues 1–20 (MADEQQTLDQQTPEQPTGAA) are disordered.

The protein belongs to the GrpE family. In terms of assembly, homodimer.

It is found in the cytoplasm. Functionally, participates actively in the response to hyperosmotic and heat shock by preventing the aggregation of stress-denatured proteins, in association with DnaK and GrpE. It is the nucleotide exchange factor for DnaK and may function as a thermosensor. Unfolded proteins bind initially to DnaJ; upon interaction with the DnaJ-bound protein, DnaK hydrolyzes its bound ATP, resulting in the formation of a stable complex. GrpE releases ADP from DnaK; ATP binding to DnaK triggers the release of the substrate protein, thus completing the reaction cycle. Several rounds of ATP-dependent interactions between DnaJ, DnaK and GrpE are required for fully efficient folding. The sequence is that of Protein GrpE from Pseudomonas aeruginosa (strain LESB58).